The following is a 415-amino-acid chain: Alpha-N-acetylgalactosaminidase (415 aa).

Residues 1–17 (MLQKTVLLLALVAQVLM) form the signal peptide. 3 disulfides stabilise this stretch: Cys-38-Cys-80, Cys-42-Cys-49, and Cys-127-Cys-158. Residues 78–79 (DD) and Lys-154 contribute to the substrate site. The active-site Nucleophile is the Asp-156. Asn-177 is a glycosylation site (N-linked (GlcNAc...) asparagine). A disulfide bridge links Cys-187 with Cys-209. Ser-188 serves as a coordination point for substrate. Asn-201 carries an N-linked (GlcNAc...) asparagine glycan. Positions 213 and 217 each coordinate substrate. Asp-217 (proton donor) is an active-site residue. Ser-322 is subject to Phosphoserine. Asn-330 carries N-linked (GlcNAc...) asparagine glycosylation. Ser-332 carries the phosphoserine modification. A glycan (N-linked (GlcNAc...) asparagine) is linked at Asn-385.

This sequence belongs to the glycosyl hydrolase 27 family. In terms of assembly, homodimer.

It localises to the lysosome. It carries out the reaction Cleavage of non-reducing alpha-(1-&gt;3)-N-acetylgalactosamine residues from human blood group A and AB mucin glycoproteins, Forssman hapten and blood group A lacto series glycolipids.. The enzyme catalyses a neolactoside IV(3)-alpha-GalNAc,IV(2)-alpha-Fuc-nLc4Cer(d18:1(4E)) + H2O = a neolactoside IV(2)-alpha-Fuc-nLc4Cer(d18:1(4E)) + N-acetyl-alpha-D-galactosamine. It catalyses the reaction a neolactoside IV(3)-alpha-GalNAc,IV(2)-alpha-Fuc-nLc4Cer(d18:0) + H2O = a neolactoside IV(2)-alpha-Fuc-nLc4Cer(d18:0) + N-acetyl-alpha-D-galactosamine. The catalysed reaction is a globoside IV3GalNAc-Gb4Cer + H2O = N-acetyl-alpha-D-galactosamine + a globoside Gb4Cer. Removes terminal alpha-N-acetylgalactosamine residues from glycolipids and glycopeptides. Required for the breakdown of glycolipids. In Rattus norvegicus (Rat), this protein is Alpha-N-acetylgalactosaminidase (Naga).